The primary structure comprises 84 residues: Small ribosomal subunit protein uS17 (84 aa).

It belongs to the universal ribosomal protein uS17 family. As to quaternary structure, part of the 30S ribosomal subunit.

In terms of biological role, one of the primary rRNA binding proteins, it binds specifically to the 5'-end of 16S ribosomal RNA. The sequence is that of Small ribosomal subunit protein uS17 from Aliivibrio salmonicida (strain LFI1238) (Vibrio salmonicida (strain LFI1238)).